The primary structure comprises 226 residues: Agamous-like MADS-box protein AGL23 (226 aa).

The MADS-box domain maps to 6 to 66 (LGRRKVEIVK…GKVFSFGHPN (61 aa)). A coiled-coil region spans residues 95-132 (VQMLNKSYTEVKAEVEKEQKNKQSRAQNERENENAEEW). Basic and acidic residues predominate over residues 108–127 (EVEKEQKNKQSRAQNERENE). The segment at 108-131 (EVEKEQKNKQSRAQNERENENAEE) is disordered.

The protein localises to the nucleus. Probable transcription factor that controls female gametophyte (megagametogenesis) development and chloroplast biogenesis during embryo development. In Arabidopsis thaliana (Mouse-ear cress), this protein is Agamous-like MADS-box protein AGL23.